A 201-amino-acid polypeptide reads, in one-letter code: Small ribosomal subunit protein uS4c (201 aa).

The S4 RNA-binding domain occupies 89–152 (MRLDNILFRL…NSRTLVQNLL (64 aa)).

This sequence belongs to the universal ribosomal protein uS4 family. In terms of assembly, part of the 30S ribosomal subunit. Contacts protein S5. The interaction surface between S4 and S5 is involved in control of translational fidelity.

The protein localises to the plastid. It is found in the chloroplast. Functionally, one of the primary rRNA binding proteins, it binds directly to 16S rRNA where it nucleates assembly of the body of the 30S subunit. Its function is as follows. With S5 and S12 plays an important role in translational accuracy. The sequence is that of Small ribosomal subunit protein uS4c (rps4) from Arabidopsis thaliana (Mouse-ear cress).